The sequence spans 213 residues: dITP/XTP pyrophosphatase (213 aa).

Residue 7–12 (TSNLDK) coordinates substrate. The Proton acceptor role is filled by D74. Mg(2+) is bound at residue D74. Residues S75, 165–168 (FGYD), K188, and 193–194 (HR) contribute to the substrate site.

This sequence belongs to the HAM1 NTPase family. In terms of assembly, homodimer. Mg(2+) serves as cofactor.

The enzyme catalyses XTP + H2O = XMP + diphosphate + H(+). The catalysed reaction is dITP + H2O = dIMP + diphosphate + H(+). It catalyses the reaction ITP + H2O = IMP + diphosphate + H(+). In terms of biological role, pyrophosphatase that catalyzes the hydrolysis of nucleoside triphosphates to their monophosphate derivatives, with a high preference for the non-canonical purine nucleotides XTP (xanthosine triphosphate), dITP (deoxyinosine triphosphate) and ITP. Seems to function as a house-cleaning enzyme that removes non-canonical purine nucleotides from the nucleotide pool, thus preventing their incorporation into DNA/RNA and avoiding chromosomal lesions. The protein is dITP/XTP pyrophosphatase of Campylobacter concisus (strain 13826).